The primary structure comprises 85 residues: MKLLLLLTISASMLIEGLVNADGYIRGGDGCKVSCVINHVFCDNECKAAGGSYGYCWGWGLACWCEGLPAEREWDYETDTCGGKK.

The first 21 residues, 1–21 (MKLLLLLTISASMLIEGLVNA), serve as a signal peptide directing secretion. The LCN-type CS-alpha/beta domain maps to 22–82 (DGYIRGGDGC…EWDYETDTCG (61 aa)). Intrachain disulfides connect C31–C81, C35–C56, C42–C63, and C46–C65. G82 is modified (glycine amide).

This sequence belongs to the long (4 C-C) scorpion toxin superfamily. Sodium channel inhibitor family. Beta subfamily. As to expression, expressed by the venom gland.

It localises to the secreted. In terms of biological role, depressant insect beta-toxins cause a transient contraction paralysis followed by a slow flaccid paralysis. They bind voltage-independently at site-4 of sodium channels (Nav) and block action potentials, primarily by depolarizing the axonal membrane and suppressing the sodium current. This depressant toxin is active only on insects. It is found in a relatively small amount in the venom. The chain is Beta-insect depressant toxin Lqh-dprIT3g from Leiurus hebraeus (Hebrew deathstalker scorpion).